The following is a 492-amino-acid chain: Ribose import ATP-binding protein RbsA (492 aa).

2 ABC transporter domains span residues 3–239 (IEMK…VGRS) and 249–492 (AEIR…TGGQ). Position 35-42 (35-42 (GENGAGKS)) interacts with ATP.

It belongs to the ABC transporter superfamily. Ribose importer (TC 3.A.1.2.1) family. The complex is composed of an ATP-binding protein (RbsA), two transmembrane proteins (RbsC) and a solute-binding protein (RbsB).

The protein resides in the cell membrane. The enzyme catalyses D-ribose(out) + ATP + H2O = D-ribose(in) + ADP + phosphate + H(+). Its function is as follows. Part of the ABC transporter complex RbsABC involved in ribose import. Responsible for energy coupling to the transport system. The chain is Ribose import ATP-binding protein RbsA from Lactococcus lactis subsp. lactis (strain IL1403) (Streptococcus lactis).